The chain runs to 436 residues: UPF0597 protein YhaM (436 aa).

The protein belongs to the UPF0597 family.

In Salmonella typhi, this protein is UPF0597 protein YhaM.